A 131-amino-acid polypeptide reads, in one-letter code: D-ribose pyranase (131 aa).

H20 functions as the Proton donor in the catalytic mechanism. Substrate is bound by residues D28, H98, and 120 to 122 (FSN).

The protein belongs to the RbsD / FucU family. RbsD subfamily. As to quaternary structure, homodecamer.

Its subcellular location is the cytoplasm. The catalysed reaction is beta-D-ribopyranose = beta-D-ribofuranose. The protein operates within carbohydrate metabolism; D-ribose degradation; D-ribose 5-phosphate from beta-D-ribopyranose: step 1/2. Catalyzes the interconversion of beta-pyran and beta-furan forms of D-ribose. The polypeptide is D-ribose pyranase (Oenococcus oeni (strain ATCC BAA-331 / PSU-1)).